The chain runs to 117 residues: Tyrosine-protein phosphatase 25 (117 aa).

One can recognise a Tyrosine-protein phosphatase domain in the interval 1–117; sequence WLMIIEQKCN…DLIGQSPIVV (117 aa). Residue aspartate 85 coordinates substrate.

Belongs to the protein-tyrosine phosphatase family.

It carries out the reaction O-phospho-L-tyrosyl-[protein] + H2O = L-tyrosyl-[protein] + phosphate. This chain is Tyrosine-protein phosphatase 25 (STY-25), found in Styela plicata (Wrinkled sea squirt).